The following is a 473-amino-acid chain: Anthocyanidin-3-O-glucoside rhamnosyltransferase (473 aa).

The protein belongs to the UDP-glycosyltransferase family. As to expression, expressed in petals, styles and anthers.

It functions in the pathway pigment biosynthesis; anthocyanin biosynthesis. Functionally, controls the rhamnosylation of reddish anthocyanidin-3-O-glucosides, which is the first step in a series of modifications that finally yield magenta or blue/purple coloured anthocyanins. Controls the conversion of anthocyanidin-3-O-glucosides to anthocyanidin-3-O-rutinosides. The polypeptide is Anthocyanidin-3-O-glucoside rhamnosyltransferase (Petunia hybrida (Petunia)).